The following is an 883-amino-acid chain: Alanine--tRNA ligase (883 aa).

The Zn(2+) site is built by histidine 562, histidine 566, cysteine 675, and histidine 679.

The protein belongs to the class-II aminoacyl-tRNA synthetase family. It depends on Zn(2+) as a cofactor.

It localises to the cytoplasm. The catalysed reaction is tRNA(Ala) + L-alanine + ATP = L-alanyl-tRNA(Ala) + AMP + diphosphate. In terms of biological role, catalyzes the attachment of alanine to tRNA(Ala) in a two-step reaction: alanine is first activated by ATP to form Ala-AMP and then transferred to the acceptor end of tRNA(Ala). Also edits incorrectly charged Ser-tRNA(Ala) and Gly-tRNA(Ala) via its editing domain. The protein is Alanine--tRNA ligase of Ruegeria sp. (strain TM1040) (Silicibacter sp.).